The chain runs to 77 residues: Teretoxin Tan15.2 (77 aa).

An N-terminal signal peptide occupies residues 1 to 21; it reads MTRLTVVFLAILVLLPLATSN. Residues 22 to 40 constitute a propeptide that is removed on maturation; it reads SGADEAPASLSDLLHRTKR.

Post-translationally, contains 4 disulfide bonds. As to expression, expressed by the venom duct.

Its subcellular location is the secreted. This is Teretoxin Tan15.2 from Terebra anilis (Auger snail).